The primary structure comprises 214 residues: Adenylate kinase (214 aa).

10–15 (GAGKGT) is a binding site for ATP. The segment at 30 to 59 (STGDMFRDHKARGTEIGKQVQAIMDAGGLV) is NMP. AMP is bound by residues T31, R36, 57-59 (GLV), 85-88 (GYPR), and Q92. An LID region spans residues 126–163 (GRRSCPRCGAVYHVSQNPPHRAGFCDRDDAALVQREDD). Residue R127 coordinates ATP. Residues C130 and C133 each contribute to the Zn(2+) site. Residue 136 to 137 (VY) coordinates ATP. Zn(2+) is bound by residues C150 and D153. AMP is bound by residues R160 and R171. An ATP-binding site is contributed by G199.

Belongs to the adenylate kinase family. As to quaternary structure, monomer.

It is found in the cytoplasm. It carries out the reaction AMP + ATP = 2 ADP. It participates in purine metabolism; AMP biosynthesis via salvage pathway; AMP from ADP: step 1/1. Its function is as follows. Catalyzes the reversible transfer of the terminal phosphate group between ATP and AMP. Plays an important role in cellular energy homeostasis and in adenine nucleotide metabolism. This is Adenylate kinase from Anaeromyxobacter dehalogenans (strain 2CP-1 / ATCC BAA-258).